Here is a 155-residue protein sequence, read N- to C-terminus: 6,7-dimethyl-8-ribityllumazine synthase (155 aa).

Residues Phe-24, 58–60, and 82–84 contribute to the 5-amino-6-(D-ribitylamino)uracil site; these read AFE and VII. A (2S)-2-hydroxy-3-oxobutyl phosphate-binding site is contributed by 87-88; sequence ST. The active-site Proton donor is His-90. 5-amino-6-(D-ribitylamino)uracil is bound at residue Phe-115. Arg-129 contributes to the (2S)-2-hydroxy-3-oxobutyl phosphate binding site.

This sequence belongs to the DMRL synthase family.

It catalyses the reaction (2S)-2-hydroxy-3-oxobutyl phosphate + 5-amino-6-(D-ribitylamino)uracil = 6,7-dimethyl-8-(1-D-ribityl)lumazine + phosphate + 2 H2O + H(+). Its pathway is cofactor biosynthesis; riboflavin biosynthesis; riboflavin from 2-hydroxy-3-oxobutyl phosphate and 5-amino-6-(D-ribitylamino)uracil: step 1/2. In terms of biological role, catalyzes the formation of 6,7-dimethyl-8-ribityllumazine by condensation of 5-amino-6-(D-ribitylamino)uracil with 3,4-dihydroxy-2-butanone 4-phosphate. This is the penultimate step in the biosynthesis of riboflavin. This Chlorobium phaeobacteroides (strain DSM 266 / SMG 266 / 2430) protein is 6,7-dimethyl-8-ribityllumazine synthase.